Reading from the N-terminus, the 307-residue chain is Regulating synaptic membrane exocytosis protein 3 (307 aa).

The interval 86 to 120 (STETGIAVEMRSRVTRQGSRESTDGSTNSNSSEGT) is disordered. Over residues 109 to 119 (DGSTNSNSSEG) the composition is skewed to polar residues. In terms of domain architecture, C2 spans 155–273 (PMGDVHIAIM…DLSAAVTGWY (119 aa)). A phosphoserine mark is found at serine 294 and serine 297.

As to quaternary structure, binds PPFIA3. Does not bind RAB3.

The protein resides in the synapse. In terms of biological role, regulates synaptic membrane exocytosis. The chain is Regulating synaptic membrane exocytosis protein 3 (Rims3) from Mus musculus (Mouse).